The chain runs to 1444 residues: DNA polymerase III PolC-type (1444 aa).

An Exonuclease domain is found at 421 to 577 (YVVFDVETTG…ADAEATGYLL (157 aa)).

This sequence belongs to the DNA polymerase type-C family. PolC subfamily.

It is found in the cytoplasm. The enzyme catalyses DNA(n) + a 2'-deoxyribonucleoside 5'-triphosphate = DNA(n+1) + diphosphate. Its function is as follows. Required for replicative DNA synthesis. This DNA polymerase also exhibits 3' to 5' exonuclease activity. The sequence is that of DNA polymerase III PolC-type from Lacticaseibacillus paracasei (strain ATCC 334 / BCRC 17002 / CCUG 31169 / CIP 107868 / KCTC 3260 / NRRL B-441) (Lactobacillus paracasei).